Here is a 156-residue protein sequence, read N- to C-terminus: Small ribosomal subunit protein uS7 (156 aa).

It belongs to the universal ribosomal protein uS7 family. Part of the 30S ribosomal subunit. Contacts proteins S9 and S11.

Its function is as follows. One of the primary rRNA binding proteins, it binds directly to 16S rRNA where it nucleates assembly of the head domain of the 30S subunit. Is located at the subunit interface close to the decoding center, probably blocks exit of the E-site tRNA. In Clostridium acetobutylicum (strain ATCC 824 / DSM 792 / JCM 1419 / IAM 19013 / LMG 5710 / NBRC 13948 / NRRL B-527 / VKM B-1787 / 2291 / W), this protein is Small ribosomal subunit protein uS7.